Reading from the N-terminus, the 403-residue chain is Aspartic protease pepA (403 aa).

The first 20 residues, 1–20, serve as a signal peptide directing secretion; the sequence is MVLITQLGAALAVFSALTVA. The propeptide at 21 to 67 is activation peptide; that stretch reads APTKGKARFSAPQVGIPKKAKHHPAAAYARALHKFGMKIPKAVSDAA. Residues 82–400 form the Peptidase A1 domain; that stretch reads YVTQVTVGGS…DTQGPRIGFA (319 aa). Asp-98 is a catalytic residue. Residue Asn-270 is glycosylated (N-linked (GlcNAc...) asparagine). Asp-293 is a catalytic residue. A disulfide bridge connects residues Cys-329 and Cys-362.

It belongs to the peptidase A1 family. As to quaternary structure, monomer.

It localises to the secreted. Functionally, secreted aspartic endopeptidase that allows assimilation of proteinaceous substrates. The scissile peptide bond is attacked by a nucleophilic water molecule activated by two aspartic residues in the active site. Shows a broad primary substrate specificity. Favors hydrophobic residues at the P1 and P1' positions. The polypeptide is Aspartic protease pepA (Arthroderma gypseum (strain ATCC MYA-4604 / CBS 118893) (Microsporum gypseum)).